The chain runs to 456 residues: L-seryl-tRNA(Sec) selenium transferase (456 aa).

At Lys288 the chain carries N6-(pyridoxal phosphate)lysine.

It belongs to the SelA family. The cofactor is pyridoxal 5'-phosphate.

It localises to the cytoplasm. It catalyses the reaction L-seryl-tRNA(Sec) + selenophosphate + H(+) = L-selenocysteinyl-tRNA(Sec) + phosphate. The protein operates within aminoacyl-tRNA biosynthesis; selenocysteinyl-tRNA(Sec) biosynthesis; selenocysteinyl-tRNA(Sec) from L-seryl-tRNA(Sec) (bacterial route): step 1/1. Functionally, converts seryl-tRNA(Sec) to selenocysteinyl-tRNA(Sec) required for selenoprotein biosynthesis. The sequence is that of L-seryl-tRNA(Sec) selenium transferase from Helicobacter hepaticus (strain ATCC 51449 / 3B1).